The chain runs to 89 residues: Small ribosomal subunit protein uS15 (89 aa).

Belongs to the universal ribosomal protein uS15 family. In terms of assembly, part of the 30S ribosomal subunit. Forms a bridge to the 50S subunit in the 70S ribosome, contacting the 23S rRNA.

One of the primary rRNA binding proteins, it binds directly to 16S rRNA where it helps nucleate assembly of the platform of the 30S subunit by binding and bridging several RNA helices of the 16S rRNA. In terms of biological role, forms an intersubunit bridge (bridge B4) with the 23S rRNA of the 50S subunit in the ribosome. The chain is Small ribosomal subunit protein uS15 from Serratia proteamaculans (strain 568).